Reading from the N-terminus, the 249-residue chain is Pyridoxine 5'-phosphate synthase (249 aa).

A 3-amino-2-oxopropyl phosphate-binding site is contributed by asparagine 7. 9-10 (DH) contributes to the 1-deoxy-D-xylulose 5-phosphate binding site. Arginine 18 contributes to the 3-amino-2-oxopropyl phosphate binding site. Histidine 43 (proton acceptor) is an active-site residue. 1-deoxy-D-xylulose 5-phosphate is bound by residues arginine 45 and histidine 50. Residue glutamate 70 is the Proton acceptor of the active site. Threonine 100 lines the 1-deoxy-D-xylulose 5-phosphate pocket. Histidine 198 (proton donor) is an active-site residue. 3-amino-2-oxopropyl phosphate is bound by residues alanine 199 and 220–221 (GH).

The protein belongs to the PNP synthase family. In terms of assembly, homooctamer; tetramer of dimers.

The protein localises to the cytoplasm. It catalyses the reaction 3-amino-2-oxopropyl phosphate + 1-deoxy-D-xylulose 5-phosphate = pyridoxine 5'-phosphate + phosphate + 2 H2O + H(+). The protein operates within cofactor biosynthesis; pyridoxine 5'-phosphate biosynthesis; pyridoxine 5'-phosphate from D-erythrose 4-phosphate: step 5/5. Catalyzes the complicated ring closure reaction between the two acyclic compounds 1-deoxy-D-xylulose-5-phosphate (DXP) and 3-amino-2-oxopropyl phosphate (1-amino-acetone-3-phosphate or AAP) to form pyridoxine 5'-phosphate (PNP) and inorganic phosphate. This is Pyridoxine 5'-phosphate synthase from Azoarcus sp. (strain BH72).